A 68-amino-acid polypeptide reads, in one-letter code: Lividin-1 (68 aa).

A signal peptide spans 1–22 (MFTLKKSLLLLFFLGTINLSLC). Residues 23 to 42 (QEERNADEEERRDERNVEVE) constitute a propeptide that is removed on maturation. Cys-62 and Cys-68 form a disulfide bridge.

In terms of tissue distribution, expressed by the skin glands.

It is found in the secreted. Its function is as follows. Antimicrobial peptide. This Odorrana livida (Green mountain frog) protein is Lividin-1.